A 273-amino-acid chain; its full sequence is MTRPAVSYDELDEYLRGDGHNDYVGVSAIDGLIAAVVAGPVTILPDIWLPHVFGGSMPQARPGSIEERLVNTVLNRHDEVESLLRDAPGHYYPIFMNHKGKTIVGPWAIGFSLGLSLGGEAWAPIAGNAKASDLPHHGRQSAAGQTAHPAFSSGAAEIESNRSSSHHIRSPAVARHHKTGPITTQPPAQTQPYRKTACSLRLQCTRSVEHDTQARGGPCIPGVSGLKLGLRPADRWSGCRWEHVVAYLGSPLYESTSTCAEGADRQLLVLRED.

2 helical membrane-spanning segments follow: residues Val-24 to Leu-44 and Ile-103 to Ala-123. Positions Ser-132–Arg-194 are disordered. Basic residues predominate over residues Ser-164 to Thr-179. A compositionally biased stretch (low complexity) spans Thr-183 to Pro-192.

The protein resides in the cell membrane. This is an uncharacterized protein from Sinorhizobium fredii (strain NBRC 101917 / NGR234).